Here is a 194-residue protein sequence, read N- to C-terminus: dTTP/UTP pyrophosphatase (194 aa).

D69 (proton acceptor) is an active-site residue.

This sequence belongs to the Maf family. YhdE subfamily. It depends on a divalent metal cation as a cofactor.

It localises to the cytoplasm. The enzyme catalyses dTTP + H2O = dTMP + diphosphate + H(+). It catalyses the reaction UTP + H2O = UMP + diphosphate + H(+). Its function is as follows. Nucleoside triphosphate pyrophosphatase that hydrolyzes dTTP and UTP. May have a dual role in cell division arrest and in preventing the incorporation of modified nucleotides into cellular nucleic acids. This is dTTP/UTP pyrophosphatase from Moorella thermoacetica (strain ATCC 39073 / JCM 9320).